The sequence spans 298 residues: tRNA dimethylallyltransferase (298 aa).

Position 12–19 (12–19 (GPTASGKT)) interacts with ATP. 14 to 19 (TASGKT) serves as a coordination point for substrate. The interaction with substrate tRNA stretch occupies residues 37–40 (DSRQ).

Belongs to the IPP transferase family. As to quaternary structure, monomer. Requires Mg(2+) as cofactor.

It carries out the reaction adenosine(37) in tRNA + dimethylallyl diphosphate = N(6)-dimethylallyladenosine(37) in tRNA + diphosphate. In terms of biological role, catalyzes the transfer of a dimethylallyl group onto the adenine at position 37 in tRNAs that read codons beginning with uridine, leading to the formation of N6-(dimethylallyl)adenosine (i(6)A). This is tRNA dimethylallyltransferase from Synechococcus sp. (strain CC9902).